A 267-amino-acid polypeptide reads, in one-letter code: U6 snRNA phosphodiesterase 1 (267 aa).

Residues 1–72 (MNAAPLVGYS…EDDSARHGGR (72 aa)) are disordered. The active-site Proton acceptor is His122. 122 to 124 (HLS) lines the AMP pocket. UMP contacts are provided by residues Gln166, Tyr204, and 208 to 212 (SFHVS). Residues Tyr204 and 206–212 (DPSFHVS) contribute to the AMP site. The active-site Proton donor is His210.

The protein belongs to the 2H phosphoesterase superfamily. USB1 family. In terms of assembly, interacts with PLRG1, CDC5L and PRPF19.

Its subcellular location is the nucleus. It carries out the reaction a 3'-end uridylyl-uridine-RNA = a 3'-end 2',3'-cyclophospho-uridine-RNA + uridine. The enzyme catalyses a 3'-end uridylyl-adenosine-RNA = a 3'-end 2',3'-cyclophospho-uridine-RNA + adenosine. In terms of biological role, 3'-5' RNA exonuclease that trims the 3' end of oligo(U) and oligo(A) tracts of the pre-U6 small nuclear RNA (snRNA) molecule, leading to the formation of a mature U6 snRNA 3' end-terminated with a 2',3'-cyclic phosphate. Participates in the U6 snRNA 3' end processing that prevents U6 snRNA degradation. In addition also removes uridines from the 3' end of U6atac snRNA and possibly the vault RNA VTRNA1-1. The protein is U6 snRNA phosphodiesterase 1 of Rattus norvegicus (Rat).